The primary structure comprises 254 residues: Triosephosphate isomerase (254 aa).

12 to 14 is a binding site for substrate; the sequence is NWK. Histidine 99 acts as the Electrophile in catalysis. The Proton acceptor role is filled by glutamate 169. Substrate-binding positions include glycine 175, serine 214, and 235–236; that span reads GG.

Belongs to the triosephosphate isomerase family. Homodimer.

It localises to the cytoplasm. It carries out the reaction D-glyceraldehyde 3-phosphate = dihydroxyacetone phosphate. It functions in the pathway carbohydrate biosynthesis; gluconeogenesis. Its pathway is carbohydrate degradation; glycolysis; D-glyceraldehyde 3-phosphate from glycerone phosphate: step 1/1. Its function is as follows. Involved in the gluconeogenesis. Catalyzes stereospecifically the conversion of dihydroxyacetone phosphate (DHAP) to D-glyceraldehyde-3-phosphate (G3P). This Bartonella henselae (strain ATCC 49882 / DSM 28221 / CCUG 30454 / Houston 1) (Rochalimaea henselae) protein is Triosephosphate isomerase.